We begin with the raw amino-acid sequence, 402 residues long: Shaggy-related protein kinase GSK2 (402 aa).

The tract at residues 1–38 (MDQPAPAPEPMLLDAQPPAAVACDKKQQEGEAPYAEGN) is disordered. The Protein kinase domain maps to 63-347 (YMAERVVGTG…ALDACAHPFF (285 aa)). ATP contacts are provided by residues 69-77 (VGTGSFGIV) and Lys92. Asp188 functions as the Proton acceptor in the catalytic mechanism.

This sequence belongs to the protein kinase superfamily. CMGC Ser/Thr protein kinase family. GSK-3 subfamily. In terms of assembly, interacts with DLT. Interacts with OFP8. Interacts with GRF4. Interacts with PUB24. Interacts with SMOS1. In terms of processing, autophosphorylated. In terms of tissue distribution, expressed in lamina joints, vascular tissue and nodes.

It localises to the cytoplasm. The protein resides in the nucleus. It catalyses the reaction L-seryl-[protein] + ATP = O-phospho-L-seryl-[protein] + ADP + H(+). It carries out the reaction L-threonyl-[protein] + ATP = O-phospho-L-threonyl-[protein] + ADP + H(+). Functionally, serine-threonine kinase that acts as a negative regulator of brassinosteroid (BR) signaling. Phosphorylates DLT and BZR1, two positive regulators that mediates several BR responses. Phosphorylation of DLT and BZR1 inhibits their activities in BR signaling. Phosphorylates OFP8, a positive regulator of BR responses. Phosphorylated OFP8 shuttles from the nucleus to the cytoplasm where it is degraded by the proteasome. Phosphorylates the E3 ubiquitin-protein ligase PUB24, a negative regulator of BR signaling, which targets BZR1 and promotes its degradation via the 26S proteasome. Phosphorylation of PUB24 increases its stability. Phosphorylates the AP2-ERF transcription factor SMOS1, a positive regulator of BR signaling, which cooperatively functions in a transactivating complex with BZR1 to enhance the transcription of BR biosynthetic genes. Phosphorylation of SMOS1 leads to its degradation by an unknown mechanism. This Oryza sativa subsp. japonica (Rice) protein is Shaggy-related protein kinase GSK2.